A 496-amino-acid polypeptide reads, in one-letter code: Coiled-coil domain-containing protein 77 (496 aa).

Residues 1 to 42 (MDFSPPHGLRGGRSPSLQDTTISSSHTQKNGGDSTPLPPINE) form a disordered region. A compositionally biased stretch (polar residues) spans 15-33 (PSLQDTTISSSHTQKNGGD). Residues 51 to 113 (RELLEYYRKK…KALSDMQVYL (63 aa)) are a coiled coil. Positions 170-208 (QRTVQSGDPFDRKVQRSGRAGVKQVPLKAPGKQDRTKAA) are disordered. Residues 214–495 (QILLLQVEAL…IYGLENELRI (282 aa)) are a coiled coil.

The protein is Coiled-coil domain-containing protein 77 (ccdc77) of Xenopus laevis (African clawed frog).